A 956-amino-acid polypeptide reads, in one-letter code: Plasma membrane ATPase 3 (956 aa).

Residues Met-1–Phe-65 are Cytoplasmic-facing. A helical membrane pass occupies residues Leu-66–Ile-85. Topologically, residues Ala-86–Trp-97 are extracellular. A helical transmembrane segment spans residues Gln-98–Glu-118. The Cytoplasmic portion of the chain corresponds to Asn-119–Ile-247. The chain crosses the membrane as a helical span at residues Gly-248 to Pro-268. Residues Ile-269–Ile-278 lie on the Extracellular side of the membrane. Residues Asp-279–Thr-300 form a helical membrane-spanning segment. Residues Met-301 to Lys-647 lie on the Cytoplasmic side of the membrane. Residue Asp-333 is the 4-aspartylphosphate intermediate of the active site. Mg(2+)-binding residues include Asp-592 and Asp-596. A helical membrane pass occupies residues Asn-648–Leu-669. Residues Ile-670–Asp-674 lie on the Extracellular side of the membrane. The chain crosses the membrane as a helical span at residues Phe-675–Asp-697. Topologically, residues Arg-698–Ile-713 are cytoplasmic. The chain crosses the membrane as a helical span at residues Phe-714 to Ala-734. The Extracellular portion of the chain corresponds to Ala-735–Arg-759. Residues Lys-760–Thr-780 form a helical membrane-spanning segment. Topologically, residues Arg-781–Gly-792 are cytoplasmic. The chain crosses the membrane as a helical span at residues Leu-793–Ala-813. The Extracellular portion of the chain corresponds to Asn-814 to Gly-822. A helical transmembrane segment spans residues Ile-823 to Asp-843. Residues Leu-844–Val-956 are Cytoplasmic-facing.

It belongs to the cation transport ATPase (P-type) (TC 3.A.3) family. Type IIIA subfamily. Expressed in roots, stems, leaves from both vegetative and flowering plants, and flowers at early and late stages of development with highest expression levels found in flowers and root tissue.

Its subcellular location is the cell membrane. The catalysed reaction is ATP + H2O + H(+)(in) = ADP + phosphate + 2 H(+)(out). In terms of biological role, the plasma membrane ATPase of plants and fungi is a hydrogen ion pump. The proton gradient it generates drives the active transport of nutrients by H(+)-symport. The resulting external acidification and/or internal alkinization may mediate growth responses. This is Plasma membrane ATPase 3 (PMA3) from Nicotiana plumbaginifolia (Leadwort-leaved tobacco).